We begin with the raw amino-acid sequence, 82 residues long: Small ribosomal subunit protein bS20 (82 aa).

The interval 1-29 is disordered; the sequence is MPNIKSAKKDLRRSRAAAVRNRAQRSALR. Residues 16–29 are compositionally biased toward low complexity; sequence AAAVRNRAQRSALR.

It belongs to the bacterial ribosomal protein bS20 family.

Binds directly to 16S ribosomal RNA. The chain is Small ribosomal subunit protein bS20 from Gemmatimonas aurantiaca (strain DSM 14586 / JCM 11422 / NBRC 100505 / T-27).